Consider the following 354-residue polypeptide: Sulfate/thiosulfate import ATP-binding protein CysA 2 (354 aa).

The region spanning Ile-3 to Leu-237 is the ABC transporter domain. Residue Gly-35 to Thr-42 coordinates ATP.

The protein belongs to the ABC transporter superfamily. Sulfate/tungstate importer (TC 3.A.1.6) family. In terms of assembly, the complex is composed of two ATP-binding proteins (CysA), two transmembrane proteins (CysT and CysW) and a solute-binding protein (CysP).

The protein localises to the cell inner membrane. It carries out the reaction sulfate(out) + ATP + H2O = sulfate(in) + ADP + phosphate + H(+). It catalyses the reaction thiosulfate(out) + ATP + H2O = thiosulfate(in) + ADP + phosphate + H(+). In terms of biological role, part of the ABC transporter complex CysAWTP involved in sulfate/thiosulfate import. Responsible for energy coupling to the transport system. In Shewanella oneidensis (strain ATCC 700550 / JCM 31522 / CIP 106686 / LMG 19005 / NCIMB 14063 / MR-1), this protein is Sulfate/thiosulfate import ATP-binding protein CysA 2.